We begin with the raw amino-acid sequence, 427 residues long: Enolase 2 (427 aa).

Glutamine 165 serves as a coordination point for (2R)-2-phosphoglycerate. The Proton donor role is filled by glutamate 207. 3 residues coordinate Mg(2+): aspartate 244, glutamate 287, and aspartate 314. Positions 339, 368, 369, and 390 each coordinate (2R)-2-phosphoglycerate. Residue lysine 339 is the Proton acceptor of the active site.

It belongs to the enolase family. In terms of assembly, component of the RNA degradosome, a multiprotein complex involved in RNA processing and mRNA degradation. The cofactor is Mg(2+).

The protein resides in the cytoplasm. The protein localises to the secreted. It is found in the cell surface. It carries out the reaction (2R)-2-phosphoglycerate = phosphoenolpyruvate + H2O. It participates in carbohydrate degradation; glycolysis; pyruvate from D-glyceraldehyde 3-phosphate: step 4/5. Its function is as follows. Catalyzes the reversible conversion of 2-phosphoglycerate (2-PG) into phosphoenolpyruvate (PEP). It is essential for the degradation of carbohydrates via glycolysis. This Pseudomonas syringae pv. tomato (strain ATCC BAA-871 / DC3000) protein is Enolase 2.